The chain runs to 556 residues: Urocanate hydratase (556 aa).

Residues 52-53, Q130, 176-178, E196, R201, 243-244, 264-268, 274-275, and Y323 contribute to the NAD(+) site; these read GG, GMG, NA, QTSAH, and YL. The active site involves C411. G493 provides a ligand contact to NAD(+).

The protein belongs to the urocanase family. NAD(+) is required as a cofactor.

It is found in the cytoplasm. It carries out the reaction 4-imidazolone-5-propanoate = trans-urocanate + H2O. It functions in the pathway amino-acid degradation; L-histidine degradation into L-glutamate; N-formimidoyl-L-glutamate from L-histidine: step 2/3. Its function is as follows. Catalyzes the conversion of urocanate to 4-imidazolone-5-propionate. This chain is Urocanate hydratase, found in Rhodospirillum rubrum (strain ATCC 11170 / ATH 1.1.1 / DSM 467 / LMG 4362 / NCIMB 8255 / S1).